The following is a 664-amino-acid chain: Transketolase 1 (664 aa).

His26 lines the substrate pocket. Thiamine diphosphate contacts are provided by residues His66 and 114–116 (GPL). Asp155 lines the Mg(2+) pocket. The thiamine diphosphate site is built by Gly156 and Asn185. Asn185 and Ile187 together coordinate Mg(2+). Substrate is bound by residues His260, Arg357, and Ser384. His260 contacts thiamine diphosphate. Glu411 acts as the Proton donor in catalysis. Phe437 is a thiamine diphosphate binding site. Substrate-binding residues include His461, Asp469, and Arg520.

It belongs to the transketolase family. In terms of assembly, homodimer. It depends on Mg(2+) as a cofactor. Ca(2+) is required as a cofactor. The cofactor is Mn(2+). Requires Co(2+) as cofactor. Thiamine diphosphate serves as cofactor.

The catalysed reaction is D-sedoheptulose 7-phosphate + D-glyceraldehyde 3-phosphate = aldehydo-D-ribose 5-phosphate + D-xylulose 5-phosphate. Its function is as follows. Catalyzes the transfer of a two-carbon ketol group from a ketose donor to an aldose acceptor, via a covalent intermediate with the cofactor thiamine pyrophosphate. The protein is Transketolase 1 (tkt1) of Vibrio vulnificus (strain CMCP6).